A 111-amino-acid chain; its full sequence is MSDTLNRLAEVLEERKQAAPDSSYVASLYHKGLNKILEKLGEESVETIIAAKDAAVSKDYSDVIYETADLWFHSLVMLSALGQHPQAVLDELERRFGLSGHDEKAAREPSA.

Belongs to the PRA-PH family.

It localises to the cytoplasm. It catalyses the reaction 1-(5-phospho-beta-D-ribosyl)-ATP + H2O = 1-(5-phospho-beta-D-ribosyl)-5'-AMP + diphosphate + H(+). The protein operates within amino-acid biosynthesis; L-histidine biosynthesis; L-histidine from 5-phospho-alpha-D-ribose 1-diphosphate: step 2/9. In Pseudomonas putida (strain W619), this protein is Phosphoribosyl-ATP pyrophosphatase.